Here is a 993-residue protein sequence, read N- to C-terminus: DNA double-strand break repair Rad50 ATPase (993 aa).

Residues R12, 32-38 (NGSGKSS), and Q133 contribute to the ATP site. Coiled coils occupy residues 192-222 (LENL…LEKL) and 402-493 (EELK…LEKT). The 105-residue stretch at 452–556 (ENELKEKYED…KLNEIDSFKL (105 aa)) folds into the Zinc-hook domain. C497 and C500 together coordinate Zn(2+). Coiled-coil stretches lie at residues 570-612 (KVEE…LEND), 646-677 (DSSK…EINL), and 702-731 (ETEK…VLKN).

Belongs to the SMC family. RAD50 subfamily. Homodimer. Forms a heterotetramer composed of two Mre11 subunits and two Rad50 subunits. Requires Zn(2+) as cofactor.

In terms of biological role, part of the Rad50/Mre11 complex, which is involved in the early steps of DNA double-strand break (DSB) repair. The complex may facilitate opening of the processed DNA ends to aid in the recruitment of HerA and NurA. Rad50 controls the balance between DNA end bridging and DNA resection via ATP-dependent structural rearrangements of the Rad50/Mre11 complex. This is DNA double-strand break repair Rad50 ATPase from Methanococcus maripaludis (strain DSM 14266 / JCM 13030 / NBRC 101832 / S2 / LL).